A 116-amino-acid polypeptide reads, in one-letter code: CDKN2AIP N-terminal-like protein (116 aa).

At M1 the chain carries N-acetylmethionine. The XRN2-binding (XTBD) domain maps to 24-116; it reads AEQFRSYSES…RSELMRKHQS (93 aa).

It belongs to the CARF family. Interacts with XRN2; the interaction is direct.

This Mus musculus (Mouse) protein is CDKN2AIP N-terminal-like protein (Cdkn2aipnl).